A 94-amino-acid polypeptide reads, in one-letter code: Immune protein Tsi6 (94 aa).

Its function is as follows. Immunity protein that plays a role in preventing early activation of toxin Tse6. This is Immune protein Tsi6 from Pseudomonas aeruginosa (strain ATCC 15692 / DSM 22644 / CIP 104116 / JCM 14847 / LMG 12228 / 1C / PRS 101 / PAO1).